The primary structure comprises 438 residues: 3-phosphoshikimate 1-carboxyvinyltransferase (438 aa).

The 3-phosphoshikimate site is built by Lys21, Ser22, and Arg26. Phosphoenolpyruvate is bound at residue Lys21. Phosphoenolpyruvate is bound by residues Gly95 and Arg123. Residues Ser167, Gln169, Asp315, and Lys342 each coordinate 3-phosphoshikimate. Gln169 contacts phosphoenolpyruvate. Asp315 (proton acceptor) is an active-site residue. Phosphoenolpyruvate-binding residues include Arg346 and Arg387.

The protein belongs to the EPSP synthase family. Monomer.

Its subcellular location is the cytoplasm. The catalysed reaction is 3-phosphoshikimate + phosphoenolpyruvate = 5-O-(1-carboxyvinyl)-3-phosphoshikimate + phosphate. It functions in the pathway metabolic intermediate biosynthesis; chorismate biosynthesis; chorismate from D-erythrose 4-phosphate and phosphoenolpyruvate: step 6/7. Its function is as follows. Catalyzes the transfer of the enolpyruvyl moiety of phosphoenolpyruvate (PEP) to the 5-hydroxyl of shikimate-3-phosphate (S3P) to produce enolpyruvyl shikimate-3-phosphate and inorganic phosphate. The sequence is that of 3-phosphoshikimate 1-carboxyvinyltransferase from Coxiella burnetii (strain CbuG_Q212) (Coxiella burnetii (strain Q212)).